The following is a 386-amino-acid chain: Palmitoyltransferase ZDHHC9 (386 aa).

At 1–35 (MSAVMITRKITRKWEKLPGKNTFCCDGRVMMARQK) the chain is on the cytoplasmic side. Residues 36 to 56 (GVFYLTLFLIVGTCSLFFAFE) form a helical membrane-spanning segment. Residues 57-63 (CPYLAVH) lie on the Lumenal side of the membrane. Residues 64–84 (LSPAIPVFAVLLFVFVMAMLL) form a helical membrane-spanning segment. Residues 85–183 (RTSFSDPGVL…NCVGKRNYRY (99 aa)) are Cytoplasmic-facing. Residues 139–189 (KYCYTCKIFRPPRASHCSICDNCVDRFDHHCPWVGNCVGKRNYRYFYLFTL) form the DHHC domain. The active-site S-palmitoyl cysteine intermediate is the C169. A helical membrane pass occupies residues 184–204 (FYLFTLSLSLLTIYIFAFDIV). The Lumenal portion of the chain corresponds to 205-224 (HVVLRSVDSGFVNTLKETPG). A helical transmembrane segment spans residues 225–245 (TVLEVLVCFFTLWSVVGLTGF). Residues 246–386 (HTYLISLNQT…APAVIKESTH (141 aa)) lie on the Cytoplasmic side of the membrane. Positions 306–334 (SCSSAPSNGATTVPVNKSSNPATQTTKSS) are enriched in polar residues. Positions 306-386 (SCSSAPSNGA…APAVIKESTH (81 aa)) are disordered.

The protein belongs to the DHHC palmitoyltransferase family. ERF2/ZDHHC9 subfamily.

It localises to the endoplasmic reticulum membrane. It is found in the golgi apparatus membrane. The catalysed reaction is L-cysteinyl-[protein] + hexadecanoyl-CoA = S-hexadecanoyl-L-cysteinyl-[protein] + CoA. In terms of biological role, palmitoyltransferase that catalyzes the addition of palmitate onto various protein substrates, such as ADRB2, GSDMD, HRAS, NRAS and CGAS. The chain is Palmitoyltransferase ZDHHC9 from Danio rerio (Zebrafish).